The following is a 320-amino-acid chain: Ferrochelatase (320 aa).

The Fe cation site is built by His194 and Glu275.

Belongs to the ferrochelatase family. As to quaternary structure, monomer.

Its subcellular location is the cytoplasm. The catalysed reaction is heme b + 2 H(+) = protoporphyrin IX + Fe(2+). It participates in porphyrin-containing compound metabolism; protoheme biosynthesis; protoheme from protoporphyrin-IX: step 1/1. Functionally, catalyzes the ferrous insertion into protoporphyrin IX. The polypeptide is Ferrochelatase (Shigella boydii serotype 18 (strain CDC 3083-94 / BS512)).